Consider the following 255-residue polypeptide: Triosephosphate isomerase (255 aa).

Residue 9 to 11 (NWK) participates in substrate binding. Catalysis depends on His96, which acts as the Electrophile. The active-site Proton acceptor is Glu170. Substrate-binding positions include Gly176, Ser216, and 237–238 (GG).

The protein belongs to the triosephosphate isomerase family. Homodimer.

It is found in the cytoplasm. The enzyme catalyses D-glyceraldehyde 3-phosphate = dihydroxyacetone phosphate. It functions in the pathway carbohydrate biosynthesis; gluconeogenesis. The protein operates within carbohydrate degradation; glycolysis; D-glyceraldehyde 3-phosphate from glycerone phosphate: step 1/1. Involved in the gluconeogenesis. Catalyzes stereospecifically the conversion of dihydroxyacetone phosphate (DHAP) to D-glyceraldehyde-3-phosphate (G3P). The chain is Triosephosphate isomerase from Magnetococcus marinus (strain ATCC BAA-1437 / JCM 17883 / MC-1).